The sequence spans 365 residues: 3-isopropylmalate dehydrogenase (365 aa).

NAD(+) is bound at residue 78-89 (GPKWGTGKVRPE). The substrate site is built by R96, R106, R135, and D224. Mg(2+)-binding residues include D224, D249, and D253. An NAD(+)-binding site is contributed by 289 to 301 (GSAPDISGKGIVN).

The protein belongs to the isocitrate and isopropylmalate dehydrogenases family. Homodimer. Requires Mg(2+) as cofactor. Mn(2+) serves as cofactor.

Its subcellular location is the cytoplasm. The enzyme catalyses (2R,3S)-3-isopropylmalate + NAD(+) = 4-methyl-2-oxopentanoate + CO2 + NADH. The protein operates within amino-acid biosynthesis; L-leucine biosynthesis; L-leucine from 3-methyl-2-oxobutanoate: step 3/4. Functionally, catalyzes the oxidation of 3-carboxy-2-hydroxy-4-methylpentanoate (3-isopropylmalate) to 3-carboxy-4-methyl-2-oxopentanoate. The product decarboxylates to 4-methyl-2 oxopentanoate. This is 3-isopropylmalate dehydrogenase (LEUC) from Zymoseptoria tritici (Speckled leaf blotch fungus).